Here is a 315-residue protein sequence, read N- to C-terminus: 4-hydroxy-3-methylbut-2-enyl diphosphate reductase (315 aa).

A [4Fe-4S] cluster-binding site is contributed by Cys-18. Residues His-47 and His-80 each contribute to the (2E)-4-hydroxy-3-methylbut-2-enyl diphosphate site. Residues His-47 and His-80 each contribute to the dimethylallyl diphosphate site. Positions 47 and 80 each coordinate isopentenyl diphosphate. Residue Cys-102 participates in [4Fe-4S] cluster binding. His-130 contributes to the (2E)-4-hydroxy-3-methylbut-2-enyl diphosphate binding site. Residue His-130 participates in dimethylallyl diphosphate binding. Residue His-130 participates in isopentenyl diphosphate binding. Glu-132 (proton donor) is an active-site residue. Residue Thr-171 participates in (2E)-4-hydroxy-3-methylbut-2-enyl diphosphate binding. A [4Fe-4S] cluster-binding site is contributed by Cys-201. (2E)-4-hydroxy-3-methylbut-2-enyl diphosphate contacts are provided by Ser-229, Ser-230, Asn-231, and Ser-274. Residues Ser-229, Ser-230, Asn-231, and Ser-274 each coordinate dimethylallyl diphosphate. Isopentenyl diphosphate-binding residues include Ser-229, Ser-230, Asn-231, and Ser-274.

Belongs to the IspH family. [4Fe-4S] cluster is required as a cofactor.

It carries out the reaction isopentenyl diphosphate + 2 oxidized [2Fe-2S]-[ferredoxin] + H2O = (2E)-4-hydroxy-3-methylbut-2-enyl diphosphate + 2 reduced [2Fe-2S]-[ferredoxin] + 2 H(+). The enzyme catalyses dimethylallyl diphosphate + 2 oxidized [2Fe-2S]-[ferredoxin] + H2O = (2E)-4-hydroxy-3-methylbut-2-enyl diphosphate + 2 reduced [2Fe-2S]-[ferredoxin] + 2 H(+). It participates in isoprenoid biosynthesis; dimethylallyl diphosphate biosynthesis; dimethylallyl diphosphate from (2E)-4-hydroxy-3-methylbutenyl diphosphate: step 1/1. It functions in the pathway isoprenoid biosynthesis; isopentenyl diphosphate biosynthesis via DXP pathway; isopentenyl diphosphate from 1-deoxy-D-xylulose 5-phosphate: step 6/6. Functionally, catalyzes the conversion of 1-hydroxy-2-methyl-2-(E)-butenyl 4-diphosphate (HMBPP) into a mixture of isopentenyl diphosphate (IPP) and dimethylallyl diphosphate (DMAPP). Acts in the terminal step of the DOXP/MEP pathway for isoprenoid precursor biosynthesis. In Hyphomonas neptunium (strain ATCC 15444), this protein is 4-hydroxy-3-methylbut-2-enyl diphosphate reductase.